Reading from the N-terminus, the 290-residue chain is Protein-glutamine deamidase Cif (290 aa).

The segment at 1-26 (MKISPNTISPSQSDPRMSTNVSQRSR) is disordered. Catalysis depends on residues cysteine 117, histidine 173, and glutamine 193.

It belongs to the Cif family.

Its subcellular location is the secreted. The protein localises to the host nucleus. The enzyme catalyses L-glutaminyl-[protein] + H2O = L-glutamyl-[protein] + NH4(+). Protein-glutamine deamidase effector that inhibits the host cell cycle and other key cellular processes such as the actin network and programmed-cell death. Acts by mediating the side chain deamidation of 'Gln-40' of host NEDD8, converting it to glutamate, thereby abolishing the activity of cullin-RING-based E3 ubiquitin-protein ligase complexes (CRL complexes). Inactivation of CRL complexes prevents ubiquitination and subsequent degradation of the cyclin-dependent kinase inhibitors CDKN1A/p21 and CDKN1B/p27, leading to G1 and G2 cell cycle arrests in host cells. Also able to catalyze deamidation of 'Gln-40' of host ubiquitin in vitro; however, NEDD8 constitutes the preferred substrate in vivo. In Yersinia pseudotuberculosis serotype O:3 (strain YPIII), this protein is Protein-glutamine deamidase Cif.